The sequence spans 133 residues: Probable mitochondrial pyruvate carrier 2 (133 aa).

3 helical membrane-spanning segments follow: residues 40–57, 73–91, and 100–116; these read VFFW…AGLA, ALFA…ITPI, and FFVM…IAHY.

The protein belongs to the mitochondrial pyruvate carrier (MPC) (TC 2.A.105) family.

The protein localises to the mitochondrion inner membrane. May mediate the uptake of pyruvate into mitochondria. The protein is Probable mitochondrial pyruvate carrier 2 of Caenorhabditis elegans.